The chain runs to 652 residues: DNA ligase (652 aa).

NAD(+) is bound by residues 29 to 33 (DSDYD), 78 to 79 (SL), and Glu107. The active-site N6-AMP-lysine intermediate is the Lys109. Positions 130, 164, 278, and 302 each coordinate NAD(+). Residues Cys395, Cys398, Cys413, and Cys418 each contribute to the Zn(2+) site. The 76-residue stretch at 577–652 (NSDAALFGLT…IEDEDWLRQL (76 aa)) folds into the BRCT domain.

This sequence belongs to the NAD-dependent DNA ligase family. LigA subfamily. It depends on Mg(2+) as a cofactor. Mn(2+) serves as cofactor.

It catalyses the reaction NAD(+) + (deoxyribonucleotide)n-3'-hydroxyl + 5'-phospho-(deoxyribonucleotide)m = (deoxyribonucleotide)n+m + AMP + beta-nicotinamide D-nucleotide.. Its function is as follows. DNA ligase that catalyzes the formation of phosphodiester linkages between 5'-phosphoryl and 3'-hydroxyl groups in double-stranded DNA using NAD as a coenzyme and as the energy source for the reaction. It is essential for DNA replication and repair of damaged DNA. In Streptococcus pyogenes serotype M4 (strain MGAS10750), this protein is DNA ligase.